The chain runs to 1273 residues: Ribulose bisphosphate carboxylase small subunit, chloroplastic (1273 aa).

A chloroplast-targeting transit peptide spans 1 to 134 (MPFDRQPLLS…AVLPFTSEKD (134 aa)). Propeptides lie at residues 269–278 (GMAAMTGEKD), 412–421 (GMAAMTGEKD), 556–565 (GMAAMTGEKD), 699–708 (GMAAMTGEKD), 844–853 (GMAAMTGEKE), 987–996 (GMAAMTGEKD), and 1131–1140 (GMAAMTGEKE).

The protein belongs to the RuBisCO small chain family. Heterohexadecamer of 8 large and 8 small subunits. Eight small subunits are processed from a large polyprotein. All start with the same sequence but there is more heterogeneity at the C-terminus.

It localises to the plastid. It is found in the chloroplast. In terms of biological role, ruBisCO catalyzes two reactions: the carboxylation of D-ribulose 1,5-bisphosphate, the primary event in carbon dioxide fixation, as well as the oxidative fragmentation of the pentose substrate. Both reactions occur simultaneously and in competition at the same active site. Although the small subunit is not catalytic it is essential for maximal activity. In Euglena gracilis, this protein is Ribulose bisphosphate carboxylase small subunit, chloroplastic.